Here is a 114-residue protein sequence, read N- to C-terminus: MKKIKGFGGKSYGKIDKSSGFEQIQQKMRDEIEKLENSFENIEVSSTSGGGAVKVTAKCNYEIVSIEYEDSLLEDREMFNDLIVAAINEALREVTKKREEELSKIVGLSGLPGL.

The protein belongs to the YbaB/EbfC family. In terms of assembly, homodimer.

The protein localises to the cytoplasm. The protein resides in the nucleoid. Its function is as follows. Binds to DNA and alters its conformation. May be involved in regulation of gene expression, nucleoid organization and DNA protection. The protein is Nucleoid-associated protein Tlet_0999 of Pseudothermotoga lettingae (strain ATCC BAA-301 / DSM 14385 / NBRC 107922 / TMO) (Thermotoga lettingae).